We begin with the raw amino-acid sequence, 341 residues long: N-acetyl-gamma-glutamyl-phosphate reductase 2 (341 aa).

Residue Cys-146 is part of the active site.

This sequence belongs to the NAGSA dehydrogenase family. Type 1 subfamily.

It localises to the cytoplasm. The enzyme catalyses N-acetyl-L-glutamate 5-semialdehyde + phosphate + NADP(+) = N-acetyl-L-glutamyl 5-phosphate + NADPH + H(+). Its pathway is amino-acid biosynthesis; L-arginine biosynthesis; N(2)-acetyl-L-ornithine from L-glutamate: step 3/4. In terms of biological role, catalyzes the NADPH-dependent reduction of N-acetyl-5-glutamyl phosphate to yield N-acetyl-L-glutamate 5-semialdehyde. The sequence is that of N-acetyl-gamma-glutamyl-phosphate reductase 2 from Lactiplantibacillus plantarum (strain ATCC BAA-793 / NCIMB 8826 / WCFS1) (Lactobacillus plantarum).